The sequence spans 264 residues: S-adenosylmethionine decarboxylase proenzyme (264 aa).

The active-site Schiff-base intermediate with substrate; via pyruvic acid is the Ser113. Ser113 is subject to Pyruvic acid (Ser); by autocatalysis. His118 (proton acceptor; for processing activity) is an active-site residue. The active-site Proton donor; for catalytic activity is the Cys141.

It belongs to the prokaryotic AdoMetDC family. Type 2 subfamily. As to quaternary structure, heterooctamer of four alpha and four beta chains arranged as a tetramer of alpha/beta heterodimers. Requires pyruvate as cofactor. Post-translationally, is synthesized initially as an inactive proenzyme. Formation of the active enzyme involves a self-maturation process in which the active site pyruvoyl group is generated from an internal serine residue via an autocatalytic post-translational modification. Two non-identical subunits are generated from the proenzyme in this reaction, and the pyruvate is formed at the N-terminus of the alpha chain, which is derived from the carboxyl end of the proenzyme. The post-translation cleavage follows an unusual pathway, termed non-hydrolytic serinolysis, in which the side chain hydroxyl group of the serine supplies its oxygen atom to form the C-terminus of the beta chain, while the remainder of the serine residue undergoes an oxidative deamination to produce ammonia and the pyruvoyl group blocking the N-terminus of the alpha chain.

The catalysed reaction is S-adenosyl-L-methionine + H(+) = S-adenosyl 3-(methylsulfanyl)propylamine + CO2. The protein operates within amine and polyamine biosynthesis; S-adenosylmethioninamine biosynthesis; S-adenosylmethioninamine from S-adenosyl-L-methionine: step 1/1. Functionally, catalyzes the decarboxylation of S-adenosylmethionine to S-adenosylmethioninamine (dcAdoMet), the propylamine donor required for the synthesis of the polyamines spermine and spermidine from the diamine putrescine. In Hahella chejuensis (strain KCTC 2396), this protein is S-adenosylmethionine decarboxylase proenzyme.